Consider the following 123-residue polypeptide: Large ribosomal subunit protein bL12 (123 aa).

Belongs to the bacterial ribosomal protein bL12 family. As to quaternary structure, homodimer. Part of the ribosomal stalk of the 50S ribosomal subunit. Forms a multimeric L10(L12)X complex, where L10 forms an elongated spine to which 2 to 4 L12 dimers bind in a sequential fashion. Binds GTP-bound translation factors.

Functionally, forms part of the ribosomal stalk which helps the ribosome interact with GTP-bound translation factors. Is thus essential for accurate translation. The polypeptide is Large ribosomal subunit protein bL12 (Rickettsia bellii (strain OSU 85-389)).